We begin with the raw amino-acid sequence, 290 residues long: Serpentine receptor class U-26 (290 aa).

The next 7 helical transmembrane spans lie at 31-51 (LPML…IIIL), 70-90 (LLSA…ADFL), 112-134 (FITI…PFLV), 158-178 (FSIP…FPAI), 185-205 (AYPF…FGLV), 213-233 (NTLF…LLLI), and 262-282 (MIFS…LHIV).

Belongs to the nematode receptor-like protein sru family.

Its subcellular location is the membrane. The polypeptide is Serpentine receptor class U-26 (sru-26) (Caenorhabditis elegans).